Consider the following 458-residue polypeptide: MLTVPKVPENFFSFFQEDYFPRLTPRGLNIADNVASLFNDYNLNSIDFTGFNLKLLRQNDIVLKNKVRYNFALQMGFDTVYAGKNTTILKFSLQAQTINFTSLQELRDSFENNGNTLSTHLFWKPVVEQLTTDGGNDLTNIAKTAIGESLFNLKVNLTDSIIDQSVLQQAQKSFEDKILDPFHAERVEAKRIHDEEARRLEAERKRIAAELKAKEDEARRIREEHWAFYQSTRDVKSFKEFWAKRGKNVADKKQLIEALKLSFQAKQNPTFELLTNAFRNAINWYYNHKKHDEEAKRTAFGSGGISFAQSGLNGIFMPNWLRWELINRANIQLQLQNVKVRENNFEVNGWGVPVSINWNDHNNGINYRATTPWTYGFEITMNYKGSYGLKGIYWTLANWGLGGIPPEWSGDMELKFQIDGKLANWITQKQDYPGSLFQFQNDKLLFTLHVVQRITVKD.

It belongs to the MG032/MG096/MG288 family.

This is an uncharacterized protein from Mycoplasma pneumoniae (strain ATCC 29342 / M129 / Subtype 1) (Mycoplasmoides pneumoniae).